The sequence spans 411 residues: Protrudin (411 aa).

The interval 1–27 is disordered; it reads MQTSEREGSGPELSPSVMPEAPLESPP. The Cytoplasmic segment spans residues 1 to 66; that stretch reads MQTSEREGSG…AGDGVRYLLR (66 aa). Positions 1-92 are sufficient for homooligomerization; the sequence is MQTSEREGSG…LFLTLNEGAW (92 aa). The interval 1-205 is sufficient for localization to endoplasmic reticulum tubular network and for interactions with REEP1, REEP5, ATL1, ATL2, ATL3 and SPAST; sequence MQTSEREGSG…LYLLPLCWVL (205 aa). A necessary for interaction with RAB11A and function in neurite outgrowth region spans residues 51 to 64; the sequence is LEPLKDAGDGVRYL. The chain crosses the membrane as a helical span at residues 67–87; that stretch reads WQMPLCSLLTCLGLNVLFLTL. Residue N88 is a topological domain, lumenal. The helical transmembrane segment at 89–109 threads the bilayer; that stretch reads EGAWYSVGALMISVPALLGYL. The Cytoplasmic segment spans residues 110-187; that stretch reads QEVCRARLPD…NPVVSSQFYG (78 aa). The segment at residues 188–208 is an intramembrane region (helical); the sequence is ALLGTVCMLYLLPLCWVLTLL. The Cytoplasmic segment spans residues 209–411; that stretch reads NSTLFLGNVE…CASCNQTLSK (203 aa). The disordered stretch occupies residues 234-286; that stretch reads MNPKQEEHAFESPPPPDVGGKDGLMDSTPALTPTEDLTPGSVEEAEEAEPDEE. Residues 271–361 are necessary for interaction with KIF5A; the sequence is TPGSVEEAEE…GCSATFSVLK (91 aa). The span at 276-286 shows a compositional bias: acidic residues; sequence EEAEEAEPDEE. Residues 286-292 form a necessary for interaction with VAPA and function in cell projections formation region; that stretch reads EFKDAIE. The FYVE-type zinc-finger motif lies at 344–410; it reads TNNFGNCTGC…VCASCNQTLS (67 aa). Zn(2+) is bound by residues C350, C353, C366, C369, C374, C377, C402, and C405.

Can form homooligomers (monomers, dimers and tetramers). Interacts with RAB11A (GDP-bound form); regulates RAB11A. Interacts with FKBP8; may negatively regulate ZFYVE27 phosphorylation. Interacts with VAPA (via MSP domain); may regulate ZFYVE27 retention in the endoplasmic reticulum and its function in cell projections formation. Interacts with VAPB (via MSP domain). Interacts with REEP1, REEP5 and ATL1. Interacts with ATL2, ATL3 and SPAST. Interacts with KIF5A and RTN3. Interacts with RAB11B (GDP-bound form), SURF4, KIF5B and KIF5C. Post-translationally, phosphorylated. Phosphorylation is induced by NGF through the MAPK/ERK pathway and modulates interaction with RAB11A.

It localises to the recycling endosome membrane. The protein resides in the endoplasmic reticulum membrane. It is found in the cell projection. The protein localises to the growth cone membrane. In terms of biological role, key regulator of RAB11-dependent vesicular trafficking during neurite extension through polarized membrane transport. Promotes axonal elongation and contributes to the establishment of neuronal cell polarity. Involved in nerve growth factor-induced neurite formation in VAPA-dependent manner. Contributes to both the formation and stabilization of the tubular ER network. Involved in ER morphogenesis by regulating the sheet-to-tubule balance and possibly the density of tubule interconnections. Acts as an adapter protein and facilitates the interaction of KIF5A with VAPA, VAPB, SURF4, RAB11A, RAB11B and RTN3 and the ZFYVE27-KIF5A complex contributes to the transport of these proteins in neurons. Can induce formation of neurite-like membrane protrusions in non-neuronal cells in a KIF5A/B-dependent manner. The sequence is that of Protrudin (ZFYVE27) from Homo sapiens (Human).